We begin with the raw amino-acid sequence, 218 residues long: DNA endonuclease I-ChuI (218 aa).

This sequence belongs to the LAGLIDADG endonuclease family.

It localises to the plastid. The protein resides in the chloroplast. Probable endonuclease involved in intron homing. Encoded in the group-I intron of the subunit rRNA-encoding gene (rrnL), it generates a staggered cut with 4-nt (CTCG) 3'-OH overhangs 2 bp downstream from the intron insertion site. The protein is DNA endonuclease I-ChuI of Chlamydomonas applanata (Chlamydomonas humicola).